The sequence spans 506 residues: Bifunctional purine biosynthesis protein PurH (506 aa).

The region spanning Met-1–Val-142 is the MGS-like domain.

This sequence belongs to the PurH family.

It catalyses the reaction (6R)-10-formyltetrahydrofolate + 5-amino-1-(5-phospho-beta-D-ribosyl)imidazole-4-carboxamide = 5-formamido-1-(5-phospho-D-ribosyl)imidazole-4-carboxamide + (6S)-5,6,7,8-tetrahydrofolate. The enzyme catalyses IMP + H2O = 5-formamido-1-(5-phospho-D-ribosyl)imidazole-4-carboxamide. It functions in the pathway purine metabolism; IMP biosynthesis via de novo pathway; 5-formamido-1-(5-phospho-D-ribosyl)imidazole-4-carboxamide from 5-amino-1-(5-phospho-D-ribosyl)imidazole-4-carboxamide (10-formyl THF route): step 1/1. It participates in purine metabolism; IMP biosynthesis via de novo pathway; IMP from 5-formamido-1-(5-phospho-D-ribosyl)imidazole-4-carboxamide: step 1/1. The polypeptide is Bifunctional purine biosynthesis protein PurH (Aquifex aeolicus (strain VF5)).